A 400-amino-acid chain; its full sequence is Enoyl-[acyl-carrier-protein] reductase [NADH] 1 (400 aa).

NAD(+) is bound by residues 48–53 (GASSGY), 74–75 (FE), 111–112 (DA), and 139–140 (LA). Tyr225 provides a ligand contact to substrate. Catalysis depends on Tyr235, which acts as the Proton donor. Residues Lys244 and 273-275 (VVT) each bind NAD(+).

This sequence belongs to the TER reductase family. As to quaternary structure, monomer.

It catalyses the reaction a 2,3-saturated acyl-[ACP] + NAD(+) = a (2E)-enoyl-[ACP] + NADH + H(+). It functions in the pathway lipid metabolism; fatty acid biosynthesis. In terms of biological role, involved in the final reduction of the elongation cycle of fatty acid synthesis (FAS II). Catalyzes the reduction of a carbon-carbon double bond in an enoyl moiety that is covalently linked to an acyl carrier protein (ACP). This Vibrio vulnificus (strain YJ016) protein is Enoyl-[acyl-carrier-protein] reductase [NADH] 1.